Consider the following 202-residue polypeptide: Molybdenum cofactor guanylyltransferase (202 aa).

GTP contacts are provided by residues 9 to 11 (LAG), lysine 22, aspartate 70, and aspartate 96. Aspartate 96 lines the Mg(2+) pocket.

The protein belongs to the MobA family. In terms of assembly, monomer. Requires Mg(2+) as cofactor.

It is found in the cytoplasm. The enzyme catalyses Mo-molybdopterin + GTP + H(+) = Mo-molybdopterin guanine dinucleotide + diphosphate. Functionally, transfers a GMP moiety from GTP to Mo-molybdopterin (Mo-MPT) cofactor (Moco or molybdenum cofactor) to form Mo-molybdopterin guanine dinucleotide (Mo-MGD) cofactor. The chain is Molybdenum cofactor guanylyltransferase from Desulfosudis oleivorans (strain DSM 6200 / JCM 39069 / Hxd3) (Desulfococcus oleovorans).